A 532-amino-acid polypeptide reads, in one-letter code: Alkaline phosphatase (532 aa).

The disordered stretch occupies residues 1–20; sequence MASERDPLLPVHGEGPESPS. The chain crosses the membrane as a helical; Signal-anchor for type II membrane protein span at residues 27-47; it reads WIKHGILLILVLSTVIFFYFF. Asp68 is a Mg(2+) binding site. Asp68 provides a ligand contact to Zn(2+). Ser115 serves as the catalytic Phosphoserine intermediate. Positions 166, 168, and 306 each coordinate Mg(2+). Zn(2+) is bound by residues Asp311, His315, Asp352, His353, and His456.

The protein belongs to the alkaline phosphatase family. It depends on Mg(2+) as a cofactor. Requires Zn(2+) as cofactor.

The protein resides in the membrane. The catalysed reaction is a phosphate monoester + H2O = an alcohol + phosphate. This is Alkaline phosphatase from Schizosaccharomyces pombe (strain 972 / ATCC 24843) (Fission yeast).